We begin with the raw amino-acid sequence, 236 residues long: tRNA1(Val) (adenine(37)-N6)-methyltransferase (236 aa).

It belongs to the methyltransferase superfamily. tRNA (adenine-N(6)-)-methyltransferase family.

It is found in the cytoplasm. The enzyme catalyses adenosine(37) in tRNA1(Val) + S-adenosyl-L-methionine = N(6)-methyladenosine(37) in tRNA1(Val) + S-adenosyl-L-homocysteine + H(+). In terms of biological role, specifically methylates the adenine in position 37 of tRNA(1)(Val) (anticodon cmo5UAC). This chain is tRNA1(Val) (adenine(37)-N6)-methyltransferase, found in Aeromonas salmonicida (strain A449).